The primary structure comprises 131 residues: UPF0102 protein RALTA_A3032 (131 aa).

Over residues 1-12 (MMRSFKSTQEPS) the composition is skewed to polar residues. Positions 1–21 (MMRSFKSTQEPSRQARGAQAE) are disordered.

The protein belongs to the UPF0102 family.

The polypeptide is UPF0102 protein RALTA_A3032 (Cupriavidus taiwanensis (strain DSM 17343 / BCRC 17206 / CCUG 44338 / CIP 107171 / LMG 19424 / R1) (Ralstonia taiwanensis (strain LMG 19424))).